The chain runs to 129 residues: Transcriptional activator protein (129 aa).

Positions 1-12 (MRSSSPSQPPSI) are enriched in low complexity. Residues 1–21 (MRSSSPSQPPSIKKAHRQAKR) form a disordered region. A Nuclear localization signal motif is present at residues 13–28 (KKAHRQAKRRAIRRRR). Residues 33 to 50 (CGCSIYFHIDCTGHGFTH) fold into a zinc finger. Positions 84-114 (IHQNEDIPCTNTVQPQPEESVASPQSLPELP) are disordered. Residues 92 to 109 (CTNTVQPQPEESVASPQS) show a composition bias toward polar residues. Residues 115–129 (SLDDFDDSFWVNLFK) are transactivation.

This sequence belongs to the geminiviridae transcriptional activator protein family. Monomer. Homodimer. Homooligomer. Self-interaction correlates with nuclear localization and efficient activation of transcription. Monomers suppress local silencing by interacting with and inactivating host adenosine kinase 2 (ADK2) in the cytoplasm. Interacts with and inhibits host SNF1 kinase. Binds to ssDNA. Post-translationally, phosphorylated.

The protein localises to the host nucleus. It localises to the host cytoplasm. Strong activator of the late viral genes promoters. Enhances the expression of the capsid protein and nuclear shuttle protein. Acts as a suppressor of RNA-mediated gene silencing, also known as post-transcriptional gene silencing (PTGS), a mechanism of plant viral defense that limits the accumulation of viral RNAs. Suppresses the host RNA silencing by inhibiting adenosine kinase 2 (ADK2), a kinase involved in a general methylation pathway. Also suppresses the host basal defense by interacting with and inhibiting SNF1 kinase, a key regulator of cell metabolism implicated in innate antiviral defense. Determines pathogenicity. The chain is Transcriptional activator protein from Abutilon (Upland cotton).